We begin with the raw amino-acid sequence, 214 residues long: Oxaloacetate tautomerase fahd-1, mitochondrial (214 aa).

Residues Glu-65, Glu-67, and Asp-96 each coordinate Mg(2+).

This sequence belongs to the FAH family. Mg(2+) is required as a cofactor. Requires Mn(2+) as cofactor. In terms of tissue distribution, widely expressed.

The protein resides in the mitochondrion. It carries out the reaction oxaloacetate = enol-oxaloacetate. In terms of biological role, tautomerase that converts enol-oxaloacetate, a strong inhibitor of succinate dehydrogenase, to the physiological keto form of oxaloacetate. The polypeptide is Oxaloacetate tautomerase fahd-1, mitochondrial (Caenorhabditis elegans).